A 555-amino-acid chain; its full sequence is Glutamine--tRNA ligase (555 aa).

The 'HIGH' region signature appears at 34 to 44; that stretch reads PEPNGYLHIGH. ATP contacts are provided by residues 35-37 and 41-47; these read EPN and HIGHAKS. L-glutamine is bound by residues Asp-67 and Tyr-212. Residues Thr-231, 261–262, and 269–271 each bind ATP; these read RL and MSK. Positions 268–272 match the 'KMSKS' region motif; it reads VMSKR. An interaction with tRNA region spans residues 317–324; that stretch reads TKQDNTIE.

This sequence belongs to the class-I aminoacyl-tRNA synthetase family. Monomer.

It is found in the cytoplasm. The enzyme catalyses tRNA(Gln) + L-glutamine + ATP = L-glutaminyl-tRNA(Gln) + AMP + diphosphate. This Enterobacter sp. (strain 638) protein is Glutamine--tRNA ligase.